The following is a 240-amino-acid chain: Protein MGARP (240 aa).

Residues 1 to 40 (MYLRRAVSKTLALPLRAPPNPAPLGKDASLRRMSSNRFPG) are Cytoplasmic-facing. Residues 41 to 63 (SSGSNMIYYLVVGVTVSAGGYYA) traverse the membrane as a helical; Anchor for type IV membrane protein segment. Residues 64-240 (YKTVTSDQAK…VGSEAASAQG (177 aa)) are Mitochondrial intermembrane-facing. The disordered stretch occupies residues 166–240 (RETTEVNPET…VGSEAASAQG (75 aa)). Positions 170 to 181 (EVNPETTPEVTN) are enriched in low complexity. Basic and acidic residues predominate over residues 191–201 (DNDKDTTKNET). Over residues 202 to 213 (SDEYAELEEENS) the composition is skewed to acidic residues. Over residues 228–240 (EASVGSEAASAQG) the composition is skewed to low complexity.

Interacts with RHOT1/Miro-1, TRAK1/OIP106 and TRAK2/GRIF1. Interacts with RHOT2/Miro-2. Expressed in the brain, adrenal gland and corneal endothelium (CE). Expressed in steroid-producing cells of the ovary and testis (at protein level). Expressed in steroid-producing cells of the ovary and testis. Weakly expressed in placenta. Expressed in corneal endothelial cells.

Its subcellular location is the mitochondrion. The protein localises to the mitochondrion outer membrane. It localises to the mitochondrion inner membrane. In terms of biological role, plays a role in the trafficking of mitochondria along microtubules. Regulates the kinesin-mediated axonal transport of mitochondria to nerve terminals along microtubules during hypoxia. Participates in the translocation of TRAK2/GRIF1 from the cytoplasm to the mitochondrion. Also plays a role in steroidogenesis through maintenance of mitochondrial abundance and morphology. Plays an inhibitory role during neocortex development by regulating mitochondrial morphology, distribution and motility in neocortical neurons. This Homo sapiens (Human) protein is Protein MGARP (MGARP).